The primary structure comprises 261 residues: MLIIPAIDIKDGKCVRLTRGDFDQQKIYLDNPRDMAIIWRKQNAKMLHVVDLDAALTGTMVNFEKIREIVATLDIPVQVGGGIRSFEDVERYLGIGVSRVVIGSAAVTNPQLIAELLATFSPSQIVVGIDAENGIPKIKGWTESSSMQDYELALEMKKLGVKRIIYTDISRDGMMQGVGYESTRRFAMKAGMRVTASGGVTSSDDLKKLQTLEQYGVDSVIVGKALYESNFPCQQLWYNYEKGMGIDCNFTTASVRGKCCF.

The active-site Proton acceptor is the Asp8. The Proton donor role is filled by Asp130.

Belongs to the HisA/HisF family.

It localises to the cytoplasm. It catalyses the reaction 1-(5-phospho-beta-D-ribosyl)-5-[(5-phospho-beta-D-ribosylamino)methylideneamino]imidazole-4-carboxamide = 5-[(5-phospho-1-deoxy-D-ribulos-1-ylimino)methylamino]-1-(5-phospho-beta-D-ribosyl)imidazole-4-carboxamide. It participates in amino-acid biosynthesis; L-histidine biosynthesis; L-histidine from 5-phospho-alpha-D-ribose 1-diphosphate: step 4/9. This chain is 1-(5-phosphoribosyl)-5-[(5-phosphoribosylamino)methylideneamino] imidazole-4-carboxamide isomerase, found in Prosthecochloris aestuarii (strain DSM 271 / SK 413).